Here is a 388-residue protein sequence, read N- to C-terminus: Glucose-6-phosphate/phosphate translocator 1, chloroplastic (388 aa).

The N-terminal 65 residues, 1–65 (MVLSVKQTLS…LRAKSPVVRC (65 aa)), are a transit peptide targeting the chloroplast. Helical transmembrane passes span 95 to 115 (LKIG…NIYN), 129 to 149 (STLS…VGIV), 158 to 178 (FWKT…AATV), 211 to 231 (FPTS…LSAL), 233 to 253 (ELNF…AFVF), 273 to 293 (YACL…AVEG), 305 to 325 (LATV…FYHL), and 363 to 383 (TPVQ…TFLY). In terms of domain architecture, EamA spans 112-229 (NIYNKKVLNA…IPIIGGCALS (118 aa)).

The protein belongs to the TPT transporter family. GPT (TC 2.A.7.9) subfamily. As to expression, expressed in seeds, flowers, rosette leaves, and roots, with highest levels found in stamens. Found in the root cap, in guard cells and in mesophyll cells.

The protein resides in the plastid. Its subcellular location is the chloroplast membrane. It is found in the endoplasmic reticulum membrane. It localises to the peroxisome membrane. In terms of biological role, glucose 6-phosphate (Glc6P) transporter. Also transports inorganic phosphate, 3-phosphoglycerate, triose phosphates and, to a leser extent, phosphoenolpyruvate. Responsible for the transport of Glc6P into plastids of heterotrophic tissues where it can be used as a carbon source for starch biosynthesis, as substrate for fatty acid biosynthesis or as substrate for NADPH generation via the oxidative pentose phosphate pathway (OPPP). Required for pollen maturation and embryo sac development. Preferentially exchanges Glc6P for ribulose-5-phosphate (Ru5P) in reconstituted yeast proteoliposomes. May supply the substrate (Glc6P) for OPPP reactions inside peroxisomes and exchange it with the product Ru5P which leaves the organelle. The chain is Glucose-6-phosphate/phosphate translocator 1, chloroplastic from Arabidopsis thaliana (Mouse-ear cress).